Consider the following 570-residue polypeptide: Urease subunit alpha (570 aa).

In terms of domain architecture, Urease spans 131 to 570 (GGMDSHIHFI…LPMAQRYFLF (440 aa)). Positions 136, 138, and 219 each coordinate Ni(2+). N6-carboxylysine is present on Lys219. Residue His221 participates in substrate binding. His248 and His274 together coordinate Ni(2+). The active-site Proton donor is the His322. Asp362 serves as a coordination point for Ni(2+).

Belongs to the metallo-dependent hydrolases superfamily. Urease alpha subunit family. As to quaternary structure, heterotrimer of UreA (gamma), UreB (beta) and UreC (alpha) subunits. Three heterotrimers associate to form the active enzyme. Ni cation serves as cofactor. In terms of processing, carboxylation allows a single lysine to coordinate two nickel ions.

It is found in the cytoplasm. The enzyme catalyses urea + 2 H2O + H(+) = hydrogencarbonate + 2 NH4(+). Its pathway is nitrogen metabolism; urea degradation; CO(2) and NH(3) from urea (urease route): step 1/1. In Rhizobium meliloti (strain 1021) (Ensifer meliloti), this protein is Urease subunit alpha.